We begin with the raw amino-acid sequence, 665 residues long: DNA ligase (665 aa).

Residues Asp-31 to Asp-35, Ser-80 to Leu-81, and Glu-111 each bind NAD(+). Residue Lys-113 is the N6-AMP-lysine intermediate of the active site. NAD(+) is bound by residues Arg-134, Glu-171, Lys-287, and Lys-311. 4 residues coordinate Zn(2+): Cys-405, Cys-408, Cys-423, and Cys-429. In terms of domain architecture, BRCT spans Phe-588–His-665.

The protein belongs to the NAD-dependent DNA ligase family. LigA subfamily. Mg(2+) is required as a cofactor. The cofactor is Mn(2+).

It catalyses the reaction NAD(+) + (deoxyribonucleotide)n-3'-hydroxyl + 5'-phospho-(deoxyribonucleotide)m = (deoxyribonucleotide)n+m + AMP + beta-nicotinamide D-nucleotide.. Its function is as follows. DNA ligase that catalyzes the formation of phosphodiester linkages between 5'-phosphoryl and 3'-hydroxyl groups in double-stranded DNA using NAD as a coenzyme and as the energy source for the reaction. It is essential for DNA replication and repair of damaged DNA. The polypeptide is DNA ligase (Protochlamydia amoebophila (strain UWE25)).